Consider the following 386-residue polypeptide: Succinyl-diaminopimelate desuccinylase (386 aa).

Position 76 (His-76) interacts with Zn(2+). Asp-78 is a catalytic residue. A Zn(2+)-binding site is contributed by Asp-110. Glu-144 functions as the Proton acceptor in the catalytic mechanism. Zn(2+) contacts are provided by Glu-145, Glu-173, and His-359.

Belongs to the peptidase M20A family. DapE subfamily. Homodimer. It depends on Zn(2+) as a cofactor. Co(2+) serves as cofactor.

The catalysed reaction is N-succinyl-(2S,6S)-2,6-diaminopimelate + H2O = (2S,6S)-2,6-diaminopimelate + succinate. The protein operates within amino-acid biosynthesis; L-lysine biosynthesis via DAP pathway; LL-2,6-diaminopimelate from (S)-tetrahydrodipicolinate (succinylase route): step 3/3. Catalyzes the hydrolysis of N-succinyl-L,L-diaminopimelic acid (SDAP), forming succinate and LL-2,6-diaminopimelate (DAP), an intermediate involved in the bacterial biosynthesis of lysine and meso-diaminopimelic acid, an essential component of bacterial cell walls. The sequence is that of Succinyl-diaminopimelate desuccinylase from Chromohalobacter salexigens (strain ATCC BAA-138 / DSM 3043 / CIP 106854 / NCIMB 13768 / 1H11).